Here is a 409-residue protein sequence, read N- to C-terminus: Killer cell lectin-like receptor subfamily G member 2 (409 aa).

The disordered stretch occupies residues 1-120 (MEESWEAAPG…GAEPAPSAWA (120 aa)). Residues 41-53 (PEGPESSPSPAGA) show a composition bias toward low complexity. The segment covering 72–81 (SPRPGSPRVP) has biased composition (pro residues). Over residues 104–120 (PRNGEAPGAEPAPSAWA) the composition is skewed to low complexity. Residue Ser-158 is modified to Phosphoserine. The disordered stretch occupies residues 193–216 (TESGCDAEGRASPAEGSAGSPGSP). Positions 202–216 (RASPAEGSAGSPGSP) are enriched in low complexity. Residues 263-283 (WALAFMAVLLAVSGVVIVVLA) traverse the membrane as a helical segment. In terms of domain architecture, C-type lectin spans 300–405 (SEEHCYYFSA…CSTPRPWVCA (106 aa)). 2 cysteine pairs are disulfide-bonded: Cys-321-Cys-404 and Cys-383-Cys-396.

It localises to the membrane. The polypeptide is Killer cell lectin-like receptor subfamily G member 2 (KLRG2) (Homo sapiens (Human)).